The sequence spans 493 residues: MERSPDVSPGPSRSFKEELLCAVCYDPFRDAVTLRCGHNFCRGCVSRCWEVQVSPTCPVCKDRASPADLRTNHTLNNLVEKLLREEAEGARWTSYRFSRVCRLHRGQLSLFCLEDKELLCCSCQADPRHQGHRVQPVKDTAHDFRAKCRNMEHALREKAKAFWAMRRSYEAIAKHNQVEAAWLEGRIRQEFDKLREFLRVEEQAILDAMAEETRQKQLLADEKMKQLTEETEVLAHEIERLQMEMKEDDVSFLMKHKSRKRRLFCTMEPEPVQPGMLIDVCKYLGSLQYRVWKKMLASVESVPFSFDPNTAAGWLSVSDDLTSVTNHGYRVQVENPERFSSAPCLLGSRVFSQGSHAWEVALGGLQSWRVGVVRVRQDSGAEGHSHSCYHDTRSGFWYVCRTQGVEGDHCVTSDPATSPLVLAIPRRLRVELECEEGELSFYDAERHCHLYTFHARFGEVRPYFYLGGARGAGPPEPLRICPLHISVKEELDG.

An N-acetylmethionine modification is found at Met-1. Phosphoserine occurs at positions 4 and 8. An RING-type zinc finger spans residues Cys-21–Lys-61. A B box-type zinc finger spans residues Arg-96–Val-137. Zn(2+)-binding residues include Cys-101, His-104, Cys-123, and His-129. Residues Ala-210 to Ser-251 are a coiled coil. One can recognise a B30.2/SPRY domain in the interval Leu-284 to Val-487.

The protein belongs to the TRIM/RBCC family. Interacts with PKM isoform M2, but not isoform M1; this interaction may compete with that between PKM and FGFR1, and hence reduces FGFR1-dependent tyrosine phosphorylation of PKM. Interacts with IRF7; this interaction promotes IRF7 proteasomal degradation. Interacts with TRAF3; this interaction promotes TRAF3 activation.

Its subcellular location is the cytoplasm. The protein resides in the nucleus. It carries out the reaction S-ubiquitinyl-[E2 ubiquitin-conjugating enzyme]-L-cysteine + [acceptor protein]-L-lysine = [E2 ubiquitin-conjugating enzyme]-L-cysteine + N(6)-ubiquitinyl-[acceptor protein]-L-lysine.. It functions in the pathway protein modification; protein ubiquitination. E3 ubiquitin-protein ligase that participates in multiple biological processes including cell death, glucose metabolism, and in particular, the innate immune response. Mediates 'Lys-63'-linked polyubiquitination of TRAF3 thereby promoting type I interferon production via RIG-I signaling pathway. Can also catalyze 'Lys-48'-linked polyubiquitination and proteasomal degradation of viral proteins such as influenza virus PB2. Acts as a negative feedback regulator of TLR7- and TLR9-triggered signaling. Mechanistically, promotes the 'Lys-48'-linked ubiquitination of IRF7 and induces its degradation via a proteasome-dependent pathway. Reduces FGFR1-dependent tyrosine phosphorylation of PKM, inhibiting PKM-dependent lactate production, glucose metabolism, and cell growth. This Homo sapiens (Human) protein is E3 ubiquitin-protein ligase TRIM35 (TRIM35).